A 100-amino-acid polypeptide reads, in one-letter code: Urease subunit gamma (100 aa).

Belongs to the urease gamma subunit family. In terms of assembly, heterotrimer of UreA (gamma), UreB (beta) and UreC (alpha) subunits. Three heterotrimers associate to form the active enzyme.

Its subcellular location is the cytoplasm. The enzyme catalyses urea + 2 H2O + H(+) = hydrogencarbonate + 2 NH4(+). The protein operates within nitrogen metabolism; urea degradation; CO(2) and NH(3) from urea (urease route): step 1/1. The chain is Urease subunit gamma from Magnetococcus marinus (strain ATCC BAA-1437 / JCM 17883 / MC-1).